The sequence spans 598 residues: Elongation factor 4 (598 aa).

Residues 2 to 184 enclose the tr-type G domain; it reads KNIRNFSIIA…EIVAKIPAPE (183 aa). Residues 14–19 and 131–134 contribute to the GTP site; these read DHGKST and NKID.

Belongs to the TRAFAC class translation factor GTPase superfamily. Classic translation factor GTPase family. LepA subfamily.

It localises to the cell inner membrane. The enzyme catalyses GTP + H2O = GDP + phosphate + H(+). Required for accurate and efficient protein synthesis under certain stress conditions. May act as a fidelity factor of the translation reaction, by catalyzing a one-codon backward translocation of tRNAs on improperly translocated ribosomes. Back-translocation proceeds from a post-translocation (POST) complex to a pre-translocation (PRE) complex, thus giving elongation factor G a second chance to translocate the tRNAs correctly. Binds to ribosomes in a GTP-dependent manner. The polypeptide is Elongation factor 4 (Haemophilus influenzae (strain ATCC 51907 / DSM 11121 / KW20 / Rd)).